A 202-amino-acid chain; its full sequence is MKLLHIDSSVLAEHSVSRQLTARIVTEWQATHPGTAVEYLDLAQDTPATLSGAELAARMTPADSRSAEQTAAAARTEAFLQQFLAANVIVVGAPMYNFSIPSQLKNWIDCIAQAGRTFKYTETGPVGLAGNKTVIVASSRGGVYSTSEALRALDHQESYLRTVLGFMGIDNVRIVRAEGVNQGADRRSQALAAAEADIATLV.

Residues Ser-9, 15–17 (SVS), 95–98 (MYNF), and 139–142 (SRGG) contribute to the FMN site.

The protein belongs to the azoreductase type 1 family. As to quaternary structure, homodimer. Requires FMN as cofactor.

The catalysed reaction is 2 a quinone + NADH + H(+) = 2 a 1,4-benzosemiquinone + NAD(+). It carries out the reaction N,N-dimethyl-1,4-phenylenediamine + anthranilate + 2 NAD(+) = 2-(4-dimethylaminophenyl)diazenylbenzoate + 2 NADH + 2 H(+). Functionally, quinone reductase that provides resistance to thiol-specific stress caused by electrophilic quinones. Also exhibits azoreductase activity. Catalyzes the reductive cleavage of the azo bond in aromatic azo compounds to the corresponding amines. This chain is FMN-dependent NADH:quinone oxidoreductase, found in Laribacter hongkongensis (strain HLHK9).